A 110-amino-acid polypeptide reads, in one-letter code: UPF0122 protein BcerKBAB4_3669 (110 aa).

This sequence belongs to the UPF0122 family.

Functionally, might take part in the signal recognition particle (SRP) pathway. This is inferred from the conservation of its genetic proximity to ftsY/ffh. May be a regulatory protein. The sequence is that of UPF0122 protein BcerKBAB4_3669 from Bacillus mycoides (strain KBAB4) (Bacillus weihenstephanensis).